We begin with the raw amino-acid sequence, 1211 residues long: PH domain-containing protein DDB_G0287875 (1211 aa).

Residues 5-90 (QKKILKVFDQ…YKFFFLNPNG (86 aa)) enclose the Ras-associating 1 domain. The span at 103–112 (KSQSASTSGS) shows a compositional bias: polar residues. The tract at residues 103–133 (KSQSASTSGSAPPKKEPPKPQELQQKQHISK) is disordered. Positions 132-223 (SKGKSGWLLR…WAQELQATMN (92 aa)) constitute a PH domain. 2 Calponin-homology (CH) domains span residues 277-384 (TTLV…VGYF) and 392-502 (FNMR…LSGQ). 2 disordered regions span residues 520–941 (VEPE…TESV) and 973–1110 (TSAT…PKNT). Residues 527 to 572 (SIRDKQLKLMREKKEEEDRLKKEKEEKEKEEKEKLEKESSAAAAAT) adopt a coiled-coil conformation. The span at 528 to 565 (IRDKQLKLMREKKEEEDRLKKEKEEKEKEEKEKLEKES) shows a compositional bias: basic and acidic residues. 4 stretches are compositionally biased toward low complexity: residues 566–596 (SAAA…PLKK), 607–646 (PPTV…TLTP), 655–668 (KKPA…KPVA), and 676–691 (PSSS…TTPS). A compositionally biased stretch (basic and acidic residues) spans 703–729 (QLEKEKQDRLEKARLEKEKAEKEEQEF). The stretch at 703 to 847 (QLEKEKQDRL…ERKHDENDMD (145 aa)) forms a coiled coil. Residues 744 to 753 (LLEQQKQQQE) are compositionally biased toward low complexity. Basic and acidic residues-rich tracts occupy residues 754–778 (GQER…QRQI) and 786–853 (EARI…KLLE). Residues 862 to 877 (PTITPPQSLHSSQIIR) show a composition bias toward polar residues. Positions 880–909 (IEEDDQTNSELEMFQNEYNRLQDEEEHINS) form a coiled coil. Low complexity-rich tracts occupy residues 914–936 (GSSG…GASS) and 976–1010 (TTSD…TNNN). A compositionally biased stretch (polar residues) spans 1032 to 1048 (TKEQQSIIDKQTGLVSK). Positions 1048–1076 (KQSTNNESNEQQQQQQQQQQLQQQQSSQN) form a coiled coil. The segment covering 1049-1083 (QSTNNESNEQQQQQQQQQQLQQQQSSQNSTTSIST) has biased composition (low complexity). Residues 1093–1104 (NEEKEKESEPHK) are compositionally biased toward basic and acidic residues. The 85-residue stretch at 1112–1196 (GRVVVRICLE…DRFVFKKNDI (85 aa)) folds into the Ras-associating 2 domain.

The protein is PH domain-containing protein DDB_G0287875 of Dictyostelium discoideum (Social amoeba).